A 595-amino-acid polypeptide reads, in one-letter code: Probable serine/threonine-protein kinase KIN1 homolog (595 aa).

The region spanning 67-316 is the Protein kinase domain; that stretch reads YKLIKTLGKG…LENVKKSKWT (250 aa). ATP contacts are provided by residues 73–81 and K96; that span reads LGKGSCAKV. D188 serves as the catalytic Proton acceptor.

This sequence belongs to the protein kinase superfamily. CAMK Ser/Thr protein kinase family. NIM1 subfamily.

The protein resides in the cytoplasm. The protein localises to the cell membrane. It carries out the reaction L-seryl-[protein] + ATP = O-phospho-L-seryl-[protein] + ADP + H(+). The enzyme catalyses L-threonyl-[protein] + ATP = O-phospho-L-threonyl-[protein] + ADP + H(+). In terms of biological role, serine/threonine protein kinase involved in regulation of exocytosis. The sequence is that of Probable serine/threonine-protein kinase KIN1 homolog (KIN1) from Enterocytozoon bieneusi (strain H348) (Microsporidian parasite).